Consider the following 380-residue polypeptide: Asporin (380 aa).

Residues 1–14 form the signal peptide; sequence MKEYVLLLFLALCS. Residues 15 to 32 constitute a propeptide that is removed on maturation; the sequence is AKPFFSPSHIALKNMMLK. Acidic residues predominate over residues 35 to 54; that stretch reads EDTDDDDDDDDDDDDDDEDN. Positions 35–59 are disordered; sequence EDTDDDDDDDDDDDDDDEDNSLFPT. Residue S55 is glycosylated (O-linked (GalNAc...) serine). Residues 66 to 102 form the LRRNT domain; it reads FFPFDLFPMCPFGCQCYSRVVHCSDLGLTSVPTNIPF. 2 cysteine pairs are disulfide-bonded: C75/C81 and C79/C88. LRR repeat units lie at residues 103–124, 127–148, 151–173, 174–193, 196–219, 242–263, 266–287, 290–312, 313–334, 335–357, and 358–380; these read DTRM…DFKG, SLYG…AFLT, KLRR…PKSL, AELR…TFKG, ALHV…AFEG, TLLE…DFKR, ELQR…SLAN, RVRE…PELK, YLQI…DFCP, TVPK…VKYW, and EMQP…NFGM. Residues 166 to 212 form an interaction with TGFB1 region; it reads PLNLPKSLAELRIHENKVKKIQKDTFKGMNALHVLEMSANPLDNNGI. A glycan (N-linked (GlcNAc...) asparagine) is linked at N282. An intrachain disulfide couples C333 to C366.

The protein belongs to the small leucine-rich proteoglycan (SLRP) family. SLRP class I subfamily. Interacts with TGFB1, TGFB2 and TGFB3. DCN, BGN, and FMOD inhibit binding to TGFB1. Interacts with BMP2. Interacts in vitro with type II collagen. Interacts with type I collagen. DCN can inhibit collagen binding. In terms of processing, there is no serine/glycine dipeptide sequence expected for the attachment of O-linked glycosaminoglycans and this is probably not a proteoglycan. The O-linked polysaccharide on 54-Ser is probably the mucin type linked to GalNAc. Post-translationally, the N-linked glycan at Asn-282 is composed of variable structures of GlcNAc, mannose, fucose, HexNAc and hexose. As to expression, higher levels in osteoarthritic articular cartilage, aorta, uterus. Moderate expression in small intestine, heart, liver, bladder, ovary, stomach, and in the adrenal, thyroid, and mammary glands. Low expression in trachea, bone marrow, and lung. Colocalizes with TGFB1 in chondrocytes within osteoarthritic (OA) lesions of articular cartilage.

Its subcellular location is the secreted. It is found in the extracellular space. The protein resides in the extracellular matrix. Its function is as follows. Negatively regulates periodontal ligament (PDL) differentiation and mineralization to ensure that the PDL is not ossified and to maintain homeostasis of the tooth-supporting system. Inhibits BMP2-induced cytodifferentiation of PDL cells by preventing its binding to BMPR1B/BMP type-1B receptor, resulting in inhibition of BMP-dependent activation of SMAD proteins. Critical regulator of TGF-beta in articular cartilage and plays an essential role in cartilage homeostasis and osteoarthritis (OA) pathogenesis. Negatively regulates chondrogenesis in the articular cartilage by blocking the TGF-beta/receptor interaction on the cell surface and inhibiting the canonical TGF-beta/Smad signal. Binds calcium and plays a role in osteoblast-driven collagen biomineralization activity. This chain is Asporin (ASPN), found in Homo sapiens (Human).